A 161-amino-acid polypeptide reads, in one-letter code: Nucleotide-binding protein xcc-b100_3818 (161 aa).

The protein belongs to the YajQ family.

Functionally, nucleotide-binding protein. The protein is Nucleotide-binding protein xcc-b100_3818 of Xanthomonas campestris pv. campestris (strain B100).